Here is a 125-residue protein sequence, read N- to C-terminus: MADLAKIVEDLSSLTVLEAAELSKLLEEKWGVSAAAPVAVAAAGGAAAAAPVEEEKTEFDVILTEAGANKINVIKEVRAITGLGLKEAKDLVEGAPKAVKEAVSKAEAADLKKKLEDAGAKVDVK.

It belongs to the bacterial ribosomal protein bL12 family. Homodimer. Part of the ribosomal stalk of the 50S ribosomal subunit. Forms a multimeric L10(L12)X complex, where L10 forms an elongated spine to which 2 to 4 L12 dimers bind in a sequential fashion. Binds GTP-bound translation factors.

In terms of biological role, forms part of the ribosomal stalk which helps the ribosome interact with GTP-bound translation factors. Is thus essential for accurate translation. This is Large ribosomal subunit protein bL12 from Sinorhizobium medicae (strain WSM419) (Ensifer medicae).